We begin with the raw amino-acid sequence, 143 residues long: Large ribosomal subunit protein uL15 (143 aa).

Residues 1–56 are disordered; the sequence is MELNSIKPAEGSKHAKRRVGRGIGSGLGKTAGRGHKGQKSRSGGYHKVGFEGGQMP. Gly residues predominate over residues 21–31; it reads RGIGSGLGKTA.

This sequence belongs to the universal ribosomal protein uL15 family. In terms of assembly, part of the 50S ribosomal subunit.

Its function is as follows. Binds to the 23S rRNA. The polypeptide is Large ribosomal subunit protein uL15 (Delftia acidovorans (strain DSM 14801 / SPH-1)).